The chain runs to 310 residues: Methionyl-tRNA formyltransferase (310 aa).

A (6S)-5,6,7,8-tetrahydrofolate-binding site is contributed by 111 to 114 (SILP).

It belongs to the Fmt family.

The enzyme catalyses L-methionyl-tRNA(fMet) + (6R)-10-formyltetrahydrofolate = N-formyl-L-methionyl-tRNA(fMet) + (6S)-5,6,7,8-tetrahydrofolate + H(+). Its function is as follows. Attaches a formyl group to the free amino group of methionyl-tRNA(fMet). The formyl group appears to play a dual role in the initiator identity of N-formylmethionyl-tRNA by promoting its recognition by IF2 and preventing the misappropriation of this tRNA by the elongation apparatus. The chain is Methionyl-tRNA formyltransferase from Methylobacterium sp. (strain 4-46).